A 573-amino-acid chain; its full sequence is Putative 15-O-acetyltransferase SAT12 (573 aa).

The segment at 1–40 is disordered; that stretch reads MLDDDCSPTSSSEMSNASSREASITSRSSSTSGNNSLPED. Residues 7–36 show a composition bias toward low complexity; the sequence is SPTSSSEMSNASSREASITSRSSSTSGNNS.

It belongs to the trichothecene O-acetyltransferase family.

It participates in mycotoxin biosynthesis. Its function is as follows. Putative 15-O-acetyltransferase; part of the satratoxin SC2 cluster involved in the biosynthesis of satratoxins, trichothecene mycotoxins that are associated with human food poisonings. Satratoxins are suggested to be made by products of multiple gene clusters (SC1, SC2 and SC3) that encode 21 proteins in all, including polyketide synthases, acetyltransferases, and other enzymes expected to modify the trichothecene skeleton. SC1 encodes 10 proteins, SAT1 to SAT10. The largest are SAT8, which encodes a putative polyketide synthase (PKS) with a conventional non-reducing architecture, and SAT10, a putative protein containing four ankyrin repeats and thus may be involved in protein scaffolding. The putative short-chain reductase SAT3 may assist the PKS in some capacity. SAT6 contains a secretory lipase domain and acts probably as a trichothecene esterase. SAT5 encodes a putative acetyltransferase, and so, with SAT6, may affect endogenous protection from toxicity. The probable transcription factor SAT9 may regulate the expression of the SC1 cluster. SC2 encodes proteins SAT11 to SAT16, the largest of which encodes the putative reducing PKS SAT13. SAT11 is a cytochrome P450 monooxygenase, while SAT14 and SAT16 are probable acetyltransferases. The SC2 cluster may be regulated by the transcription factor SAT15. SC3 is a small cluster that encodes 5 proteins, SAT17 to SAT21. SAT21 is a putative MFS-type transporter which may have a role in exporting secondary metabolites. The four other proteins putatively encoded in SC3 include the taurine hydroxylase-like protein SAT17, the O-methyltransferase SAT18, the acetyltransferase SAT19, and the Cys6-type zinc finger SAT20, the latter being probably involved in regulation of SC3 expression. This Stachybotrys chartarum (strain CBS 109288 / IBT 7711) (Toxic black mold) protein is Putative 15-O-acetyltransferase SAT12.